A 448-amino-acid chain; its full sequence is Glucose-6-phosphate isomerase (448 aa).

The active-site Proton donor is glutamate 290. Active-site residues include histidine 311 and lysine 425.

The protein belongs to the GPI family.

The protein resides in the cytoplasm. It carries out the reaction alpha-D-glucose 6-phosphate = beta-D-fructose 6-phosphate. It functions in the pathway carbohydrate biosynthesis; gluconeogenesis. Its pathway is carbohydrate degradation; glycolysis; D-glyceraldehyde 3-phosphate and glycerone phosphate from D-glucose: step 2/4. Catalyzes the reversible isomerization of glucose-6-phosphate to fructose-6-phosphate. The protein is Glucose-6-phosphate isomerase of Acetivibrio thermocellus (strain ATCC 27405 / DSM 1237 / JCM 9322 / NBRC 103400 / NCIMB 10682 / NRRL B-4536 / VPI 7372) (Clostridium thermocellum).